The chain runs to 247 residues: Adenylyl-sulfate kinase (247 aa).

The segment at methionine 1–valine 24 is disordered. Glycine 55–serine 62 contributes to the ATP binding site. The Phosphoserine intermediate role is filled by serine 146.

This sequence belongs to the APS kinase family.

The catalysed reaction is adenosine 5'-phosphosulfate + ATP = 3'-phosphoadenylyl sulfate + ADP + H(+). It participates in sulfur metabolism; hydrogen sulfide biosynthesis; sulfite from sulfate: step 2/3. Its function is as follows. Catalyzes the synthesis of activated sulfate. The polypeptide is Adenylyl-sulfate kinase (Rhodopirellula baltica (strain DSM 10527 / NCIMB 13988 / SH1)).